Reading from the N-terminus, the 337-residue chain is HTH-type transcriptional repressor PurR (337 aa).

An HTH lacI-type domain is found at alanine 2–cysteine 56. A DNA-binding region (H-T-H motif) is located at residues isoleucine 4 to asparagine 23. Residues serine 48–cysteine 56 mediate DNA binding. Positions 73, 189, 191, 220, and 276 each coordinate hypoxanthine.

Homodimer.

The protein operates within purine metabolism; purine nucleotide biosynthesis [regulation]. In terms of biological role, is the main repressor of the genes involved in the de novo synthesis of purine nucleotides, regulating purB, purC, purEK, purF, purHD, purL, purMN and guaBA expression. PurR is allosterically activated to bind its cognate DNA by binding the purine corepressors, hypoxanthine or guanine, thereby effecting transcription repression. The polypeptide is HTH-type transcriptional repressor PurR (Aliivibrio fischeri (strain MJ11) (Vibrio fischeri)).